The sequence spans 350 residues: UDP-N-acetylenolpyruvoylglucosamine reductase (350 aa).

Positions 25 to 194 (VGPVARRLIT…LDVGGRSAPL (170 aa)) constitute an FAD-binding PCMH-type domain. Arg166 is a catalytic residue. The active-site Proton donor is the Ser243. The active site involves Glu342.

It belongs to the MurB family. It depends on FAD as a cofactor.

The protein localises to the cytoplasm. The enzyme catalyses UDP-N-acetyl-alpha-D-muramate + NADP(+) = UDP-N-acetyl-3-O-(1-carboxyvinyl)-alpha-D-glucosamine + NADPH + H(+). The protein operates within cell wall biogenesis; peptidoglycan biosynthesis. Functionally, cell wall formation. The protein is UDP-N-acetylenolpyruvoylglucosamine reductase of Mycobacterium sp. (strain MCS).